Consider the following 97-residue polypeptide: uncharacterized protein (97 aa).

This is an uncharacterized protein from Escherichia coli O6:K15:H31 (strain 536 / UPEC).